The primary structure comprises 622 residues: Mitochondrial distribution and morphology protein 34 (622 aa).

The SMP-LTD domain maps to 1–195 (MAFNFNWSPL…LPAIIHRLSL (195 aa)). Disordered stretches follow at residues 211 to 234 (QVTNPPLEGPGLDPLLNPPEDPVD), 303 to 322 (PSGLVSPMSPPLSRTHSHVA), 355 to 432 (SMGA…IRQP), 445 to 464 (ERNARRGIPAEFGHDIPASR), 482 to 546 (SLQQ…QTHL), and 581 to 622 (KMGG…AYRH). A compositionally biased stretch (low complexity) spans 214–225 (NPPLEGPGLDPL). Basic residues predominate over residues 360–372 (RHSKAHARKRKKR). Over residues 373–384 (VVDLRRRPKNTD) the composition is skewed to basic and acidic residues. The span at 388-404 (SVSGESEFTESTSAASV) shows a compositional bias: low complexity. Polar residues-rich tracts occupy residues 482–495 (SLQQQLHPANSKSL) and 522–532 (NASNYTSSGDS). Low complexity-rich tracts occupy residues 533-543 (QQQQQQQQQHQ) and 592-601 (NNKNDNKNNN).

The protein belongs to the MDM34 family. As to quaternary structure, component of the ER-mitochondria encounter structure (ERMES) or MDM complex, composed of MMM1, MDM10, MDM12 and MDM34.

The protein resides in the mitochondrion outer membrane. Functionally, component of the ERMES/MDM complex, which serves as a molecular tether to connect the endoplasmic reticulum (ER) and mitochondria. Components of this complex are involved in the control of mitochondrial shape and protein biogenesis, and function in nonvesicular lipid trafficking between the ER and mitochondria. MDM34 is required for the interaction of the ER-resident membrane protein MMM1 and the outer mitochondrial membrane-resident beta-barrel protein MDM10. The protein is Mitochondrial distribution and morphology protein 34 of Ajellomyces capsulatus (strain G186AR / H82 / ATCC MYA-2454 / RMSCC 2432) (Darling's disease fungus).